We begin with the raw amino-acid sequence, 379 residues long: Chaperone protein DnaJ (379 aa).

The region spanning Asp-5–Gly-70 is the J domain. The CR-type zinc-finger motif lies at Gly-134–Ser-212. Residues Cys-147, Cys-150, Cys-164, Cys-167, Cys-186, Cys-189, Cys-200, and Cys-203 each coordinate Zn(2+). CXXCXGXG motif repeat units follow at residues Cys-147–Gly-154, Cys-164–Gly-171, Cys-186–Gly-193, and Cys-200–Gly-207.

Belongs to the DnaJ family. In terms of assembly, homodimer. Zn(2+) is required as a cofactor.

Its subcellular location is the cytoplasm. Functionally, participates actively in the response to hyperosmotic and heat shock by preventing the aggregation of stress-denatured proteins and by disaggregating proteins, also in an autonomous, DnaK-independent fashion. Unfolded proteins bind initially to DnaJ; upon interaction with the DnaJ-bound protein, DnaK hydrolyzes its bound ATP, resulting in the formation of a stable complex. GrpE releases ADP from DnaK; ATP binding to DnaK triggers the release of the substrate protein, thus completing the reaction cycle. Several rounds of ATP-dependent interactions between DnaJ, DnaK and GrpE are required for fully efficient folding. Also involved, together with DnaK and GrpE, in the DNA replication of plasmids through activation of initiation proteins. This Yersinia pseudotuberculosis serotype O:1b (strain IP 31758) protein is Chaperone protein DnaJ.